The sequence spans 516 residues: Cytochrome P450 monooxygenase otaC (516 aa).

Residues 13–30 traverse the membrane as a helical segment; that stretch reads FLWTAFAVGVVYCCTRMV. Cys454 lines the heme pocket.

Belongs to the cytochrome P450 family. The cofactor is heme.

The protein resides in the membrane. The enzyme catalyses 7-methylmellein + 3 reduced [NADPH--hemoprotein reductase] + 3 O2 = 7-carboxymellein + 3 oxidized [NADPH--hemoprotein reductase] + 4 H2O + 4 H(+). It functions in the pathway mycotoxin biosynthesis. Functionally, cytochrome P450 monooxygenase; part of the gene cluster that mediates the biosynthesis of ochratoxin A (OTA), a mycotoxin composed of a chlorinated type I polyketide dihydroisocoumarin moiety linked to L-phenylalanine, and demonstrated to have nephrotoxic, immunotoxic, genotoxic, neurotoxic, and teratogenic properties. OtaC catalyzes the oxidation of 7-methylmellein (7-MM) into 7-carboxymellein. The pathway begins with the highly reducing polyketide synthase otaA that catalyzes the formation of the isocoumarin group during the initial stages of biosynthesis, starting from one acetate and 4 malonate units, to originate the characteristic pentaketide skeleton 7-methylmellein (7-MM) of the OTA molecule. The newly identified cyclase otaY might be involved in the polyketide cyclization reaction during the initial steps of the OTA biosynthesis. 7-MM is then oxidized into 7-carboxymellein (also called ochratoxin beta) by the cytochrome P450 monooxygenase otaC. The NRPS encoded by the otaB gene is involved in the linking of phenylalanine to the dihydroisocoumarin ring. The reaction catalyzed by NRPS results in the production of ochratoxin B (OTB), which is the non-chlorinated analog of OTA and which subsequently serves as the substrate of the halogenase otaD for chlorination activity to form the final molecular structure of OTA, containing a chlorine atom in the C-5 position of the molecule. The sequence is that of Cytochrome P450 monooxygenase otaC from Aspergillus carbonarius (strain ITEM 5010).